The primary structure comprises 851 residues: DNA mismatch repair protein MutS (851 aa).

614 to 621 (GPNMGGKS) lines the ATP pocket.

It belongs to the DNA mismatch repair MutS family.

Its function is as follows. This protein is involved in the repair of mismatches in DNA. It is possible that it carries out the mismatch recognition step. This protein has a weak ATPase activity. The protein is DNA mismatch repair protein MutS of Serratia proteamaculans (strain 568).